The primary structure comprises 278 residues: Manganese import system permease protein ScaB (278 aa).

The next 8 helical transmembrane spans lie at 18–38, 40–60, 61–81, 136–156, 172–192, 194–214, 220–240, and 244–264; these read ALITAIAIGIVAGAVGCFIIL, GMSLMGDAISHAVLPGVALSF, ILGINFFIGAIAFGLLASILI, VTIGVGVAVLLVIVLLFRPLL, VKLYHYLLMVLLTLVSVTAMQ, VGTILIAAMLITPAATAYLYA, MMLLSSGLGALASILGLFIGY, and IAVGSCIVLTSAIFFLISFFI.

The protein belongs to the ABC-3 integral membrane protein family.

The protein localises to the cell membrane. In terms of biological role, part of an ABC transporter complex involved in manganese import. This is Manganese import system permease protein ScaB from Streptococcus pneumoniae.